A 37-amino-acid chain; its full sequence is Photosystem II reaction center protein M (37 aa).

A helical membrane pass occupies residues 5 to 25 (ILAFIATALFILVPTAFLLII).

Belongs to the PsbM family. As to quaternary structure, PSII is composed of 1 copy each of membrane proteins PsbA, PsbB, PsbC, PsbD, PsbE, PsbF, PsbH, PsbI, PsbJ, PsbK, PsbL, PsbM, PsbT, PsbX, PsbY, PsbZ, Psb30/Ycf12, at least 3 peripheral proteins of the oxygen-evolving complex and a large number of cofactors. It forms dimeric complexes.

It localises to the plastid. The protein resides in the chloroplast thylakoid membrane. Its function is as follows. One of the components of the core complex of photosystem II (PSII). PSII is a light-driven water:plastoquinone oxidoreductase that uses light energy to abstract electrons from H(2)O, generating O(2) and a proton gradient subsequently used for ATP formation. It consists of a core antenna complex that captures photons, and an electron transfer chain that converts photonic excitation into a charge separation. This subunit is found at the monomer-monomer interface. In Pelargonium hortorum (Common geranium), this protein is Photosystem II reaction center protein M.